Reading from the N-terminus, the 368-residue chain is 3-dehydroquinate synthase (368 aa).

Residues 109 to 113 (GVIGD), 133 to 134 (TS), Lys-146, Lys-155, and 173 to 176 (TLQT) each bind NAD(+). Residues Glu-188, His-253, and His-270 each contribute to the Zn(2+) site.

The protein belongs to the sugar phosphate cyclases superfamily. Dehydroquinate synthase family. Co(2+) is required as a cofactor. It depends on Zn(2+) as a cofactor. NAD(+) serves as cofactor.

It localises to the cytoplasm. It catalyses the reaction 7-phospho-2-dehydro-3-deoxy-D-arabino-heptonate = 3-dehydroquinate + phosphate. It participates in metabolic intermediate biosynthesis; chorismate biosynthesis; chorismate from D-erythrose 4-phosphate and phosphoenolpyruvate: step 2/7. Functionally, catalyzes the conversion of 3-deoxy-D-arabino-heptulosonate 7-phosphate (DAHP) to dehydroquinate (DHQ). This Synechococcus sp. (strain ATCC 27144 / PCC 6301 / SAUG 1402/1) (Anacystis nidulans) protein is 3-dehydroquinate synthase.